A 706-amino-acid chain; its full sequence is Elongation factor G (706 aa).

One can recognise a tr-type G domain in the interval 8–290; sequence NRYRNIGICA…AVIDYLPAPT (283 aa). GTP-binding positions include 17–24, 88–92, and 142–145; these read AHVDAGKT, DTPGH, and NKMD.

This sequence belongs to the TRAFAC class translation factor GTPase superfamily. Classic translation factor GTPase family. EF-G/EF-2 subfamily.

It is found in the cytoplasm. Functionally, catalyzes the GTP-dependent ribosomal translocation step during translation elongation. During this step, the ribosome changes from the pre-translocational (PRE) to the post-translocational (POST) state as the newly formed A-site-bound peptidyl-tRNA and P-site-bound deacylated tRNA move to the P and E sites, respectively. Catalyzes the coordinated movement of the two tRNA molecules, the mRNA and conformational changes in the ribosome. The polypeptide is Elongation factor G (Stutzerimonas stutzeri (strain A1501) (Pseudomonas stutzeri)).